Here is a 320-residue protein sequence, read N- to C-terminus: MARNKIALIGSGMIGGTLAHLAGLKELGDIVLFDIADGIPQGKGLDISQSSPVEGFDVNLTGASDYSAIEGADVCIVTAGVARKPGMSRDDLLGINLKVMEQVGAGIKKYAPNAFVICITNPLDAMVWALQKFSGLPANKVVGMAGVLDSSRFRLFLAKEFNVSVQDVTAFVLGGHGDTMVPLARYSTVGGIPLTDLVTMGWVTKERLEEIIQRTRDGGAEIVGLLKTGSAYYAPAASAIEMAESYLKDKKRVLPCAAHLSGQYGVKDMYVGVPTVIGAGGVERIIEIDLNKTEKEAFDKSVGAVAGLCEACINIAPALK.

NAD(+) is bound by residues 10 to 15 and D34; that span reads GSGMIG. Residues R83 and R89 each coordinate substrate. NAD(+)-binding positions include N96 and 119–121; that span reads ITN. Substrate is bound by residues N121 and R152. Catalysis depends on H176, which acts as the Proton acceptor.

This sequence belongs to the LDH/MDH superfamily. MDH type 3 family.

It carries out the reaction (S)-malate + NAD(+) = oxaloacetate + NADH + H(+). Its function is as follows. Catalyzes the reversible oxidation of malate to oxaloacetate. The chain is Malate dehydrogenase from Rhizobium johnstonii (strain DSM 114642 / LMG 32736 / 3841) (Rhizobium leguminosarum bv. viciae).